The chain runs to 80 residues: Sulfur carrier protein TusA (80 aa).

C17 functions as the Cysteine persulfide intermediate in the catalytic mechanism.

The protein belongs to the sulfur carrier protein TusA family.

The protein localises to the cytoplasm. Its function is as follows. Sulfur carrier protein which probably makes part of a sulfur-relay system. The chain is Sulfur carrier protein TusA from Pseudomonas putida (strain ATCC 47054 / DSM 6125 / CFBP 8728 / NCIMB 11950 / KT2440).